The primary structure comprises 1338 residues: Protein dispatched homolog 3 (1338 aa).

Over 1–67 (MDTEDDPLLQ…VGWIFTNPYC (67 aa)) the chain is Cytoplasmic. The chain crosses the membrane as a helical span at residues 68–88 (AGFILFLGCAIPAVLAVVMFL). The Lumenal portion of the chain corresponds to 89-406 (HYPALDIDIS…YEVRRTFNND (318 aa)). Residues 164-196 (TRAKRSAPQGRTSSPEPRAHPHPGNETSRVTRG) form a disordered region. Residues 401–559 (RTFNNDMLLA…LFTMPAALGI (159 aa)) form the SSD domain. Residues 407-427 (MLLAFISSSCIAVLVYILTSC) form a helical membrane-spanning segment. A topological domain (cytoplasmic) is located at residue serine 428. A helical transmembrane segment spans residues 429 to 449 (VFLSFFGIASIGLSCLVALFL). The Lumenal portion of the chain corresponds to 450–452 (YHV). The helical transmembrane segment at 453–473 (VFGIQYLGILNGVAAFVIVGI) threads the bilayer. Residues 474–517 (GVDDVFVFINTYRQATHLKDLRLRMIHTIQTAGKATFFTSLTTA) lie on the Cytoplasmic side of the membrane. The helical transmembrane segment at 518-538 (AAYAANIFSQIPAVHDFGLFM) threads the bilayer. Residue serine 539 is a topological domain, lumenal. The chain crosses the membrane as a helical span at residues 540 to 560 (LIVSCCWVAVLFTMPAALGIW). The Cytoplasmic portion of the chain corresponds to 561–672 (TLYVSPLESS…WVLWSAVKSR (112 aa)). The chain crosses the membrane as a helical span at residues 673 to 693 (WVIVGLFLLVLLLSIFFASRL). The Lumenal portion of the chain corresponds to 694-1128 (RPASRAPVLF…IFMEIIGVQS (435 aa)). A disordered region spans residues 747–768 (SLEKKKRGSASPWGSKGSISDT). A helical membrane pass occupies residues 1129–1149 (ALYGLILSLVICVAAVAVFTT). Histidine 1150 is a topological domain (cytoplasmic). Residues 1151–1171 (ILLLLPVLLSILGVVCLVVTI) form a helical membrane-spanning segment. Topologically, residues 1172–1237 (MYWSGWEMGA…TIEAIRHVGV (66 aa)) are lumenal. A helical transmembrane segment spans residues 1238–1258 (AIVSSAVTTVIATVPLFFCII). Topologically, residues 1259–1266 (APFAKFGK) are cytoplasmic. Residues 1267-1287 (IVALNTGVSILYTLTVSTALL) form a helical membrane-spanning segment. Topologically, residues 1288–1302 (SIMGPGTFTRSRTSC) are lumenal. Residues 1303 to 1323 (LKAVAGVLLAGLLGLCICLAL) traverse the membrane as a helical segment. Over 1324-1338 (LKGGFKIPLPNGTAL) the chain is Cytoplasmic.

The protein belongs to the patched family. Expressed in retina, hippocampus and cerebellum. Expressed in the ganglion and bipolar cells of the inner and outer nuclear layers of the retina and in Purkinje cells (at protein level). Expressed strongly in brain and retina, weakly in testis and bone marrow.

The protein resides in the endoplasmic reticulum membrane. The protein localises to the nucleus membrane. Its subcellular location is the cytoplasmic vesicle membrane. Plays a role in neuronal proliferation and differentiation. Plays a role in the accumulation of cellular cholesterol. Involved in intracellular lipid droplet formation. May contribute to cholesterol homeostasis in neuronal cells. This is Protein dispatched homolog 3 from Gallus gallus (Chicken).